We begin with the raw amino-acid sequence, 211 residues long: FMN-dependent NADH:quinone oxidoreductase (211 aa).

Residues 17–19 and 102–105 contribute to the FMN site; these read SYS and MWNF.

The protein belongs to the azoreductase type 1 family. In terms of assembly, homodimer. FMN serves as cofactor.

It carries out the reaction 2 a quinone + NADH + H(+) = 2 a 1,4-benzosemiquinone + NAD(+). The catalysed reaction is N,N-dimethyl-1,4-phenylenediamine + anthranilate + 2 NAD(+) = 2-(4-dimethylaminophenyl)diazenylbenzoate + 2 NADH + 2 H(+). Functionally, quinone reductase that provides resistance to thiol-specific stress caused by electrophilic quinones. Its function is as follows. Also exhibits azoreductase activity. Catalyzes the reductive cleavage of the azo bond in aromatic azo compounds to the corresponding amines. This is FMN-dependent NADH:quinone oxidoreductase from Geobacillus kaustophilus (strain HTA426).